The primary structure comprises 356 residues: Arginine kinase (356 aa).

A Phosphagen kinase N-terminal domain is found at 8–91 (EKLEAGFKKL…FDPIIEDYHG (84 aa)). Residue 64-68 (GVGIY) coordinates substrate. The 238-residue stretch at 119–356 (YVISTRVRCG…LELIKIEGSL (238 aa)) folds into the Phosphagen kinase C-terminal domain. ATP is bound by residues 122 to 126 (STRVR) and H185. E225 provides a ligand contact to substrate. R229 provides a ligand contact to ATP. C271 contributes to the substrate binding site. ATP contacts are provided by residues 280–284 (RASVH) and 309–314 (RGSTGE). Substrate is bound at residue E314.

The protein belongs to the ATP:guanido phosphotransferase family.

It carries out the reaction L-arginine + ATP = N(omega)-phospho-L-arginine + ADP + H(+). In Schistocerca americana (American grasshopper), this protein is Arginine kinase (ARGK).